A 490-amino-acid polypeptide reads, in one-letter code: MDNKNFQSKTGFNLENTYLTLPNIFFSEQNPKGSKNPKLIKFNTSLAKELGLNEEILNSDFGLNIFAGNETFPGITPIAQAYAGHQFGHFTMLGDGRALLLGEHVTKDGKRYDVQLKGSGRTIYSRGGDGKAALAPMLREYIISEGMHSLGIPTTRSLAVVSTGEEVLREKFEQGAILTRIASSHIRVGTFAYAAQWGTLEDLKSLADYTIKRHFPNIANSENKYILFLEEVINRQAELIVKWQSVGFIHGVMNTDNMVISGETIDYGPCAFMDTYDTNTVFSSIDYAGRYAYGNQPNMALWNLARFSEALLPLLNPNLDEAVNIAKKSISSFSKLYKKYWFNKMRAKLGLFTKKENDELLIEGLLSTMQKYEADFTNTFVSLTLNKFEDEKVFSSNEFKTWYALWKDRLKEENRPKEEVRNLMMNNNPYIIPRNHLVEEALKNAEKGDFTFMDNLLEALKNPYSYSKDLEKYTKLPEKSDIPYVTYCGT.

ATP-binding residues include G94, G96, R97, K117, D129, G130, R180, and R187. The active-site Proton acceptor is D256. The Mg(2+) site is built by N257 and D266. D266 lines the ATP pocket.

The protein belongs to the SELO family. Mg(2+) serves as cofactor. The cofactor is Mn(2+).

The catalysed reaction is L-seryl-[protein] + ATP = 3-O-(5'-adenylyl)-L-seryl-[protein] + diphosphate. It carries out the reaction L-threonyl-[protein] + ATP = 3-O-(5'-adenylyl)-L-threonyl-[protein] + diphosphate. It catalyses the reaction L-tyrosyl-[protein] + ATP = O-(5'-adenylyl)-L-tyrosyl-[protein] + diphosphate. The enzyme catalyses L-histidyl-[protein] + UTP = N(tele)-(5'-uridylyl)-L-histidyl-[protein] + diphosphate. The catalysed reaction is L-seryl-[protein] + UTP = O-(5'-uridylyl)-L-seryl-[protein] + diphosphate. It carries out the reaction L-tyrosyl-[protein] + UTP = O-(5'-uridylyl)-L-tyrosyl-[protein] + diphosphate. In terms of biological role, nucleotidyltransferase involved in the post-translational modification of proteins. It can catalyze the addition of adenosine monophosphate (AMP) or uridine monophosphate (UMP) to a protein, resulting in modifications known as AMPylation and UMPylation. In Clostridium perfringens (strain SM101 / Type A), this protein is Protein nucleotidyltransferase YdiU.